The following is a 3198-amino-acid chain: Helicase domino (3198 aa).

Residues 1 to 12 (MNEGNSAGGGHE) are compositionally biased toward gly residues. Disordered regions lie at residues 1–27 (MNEG…RVTP), 93–112 (LPQQ…APAH), and 119–148 (SSTI…AASI). Residues 134–143 (QRLDDNEDRT) show a composition bias toward basic and acidic residues. Residues 187-212 (KKRILQQKLQILRNLKERHLENVSEY) adopt a coiled-coil conformation. Disordered regions lie at residues 256–350 (TSAA…SATS) and 391–474 (GGTP…TPNS). 2 stretches are compositionally biased toward polar residues: residues 264–281 (QNQK…SSLV) and 297–329 (NISN…TESN). Low complexity predominate over residues 330 to 350 (SSTTVPGTATSGAATSTSATS). A compositionally biased stretch (polar residues) spans 391–404 (GGTPLLPCNTSAGS). The span at 452–464 (PGTPTSGSLLSPA) shows a compositional bias: low complexity. An HSA domain is found at 507 to 579 (LPKLQEPSRP…QELQLKRVAS (73 aa)). The interval 635–848 (NKSVADTPSL…DMEEQDEQED (214 aa)) is disordered. Over residues 638–650 (VADTPSLNSSRLT) the composition is skewed to polar residues. Basic and acidic residues predominate over residues 652 to 664 (PKRESDDDFRPES). Phosphoserine occurs at positions 656, 664, and 666. Residues 666 to 696 (SEDDEETIAKAEEDAADVKEEVTALAKESEM) adopt a coiled-coil conformation. Composition is skewed to basic and acidic residues over residues 672 to 695 (TIAK…KESE) and 711 to 721 (ENRDKLMKEEQ). Thr729 is modified (phosphothreonine). Phosphoserine is present on residues Ser733, Ser736, and Ser744. Residues 741 to 784 (KEASDDDENTISKQEEAEQEIDHKKEIDELEADNDLSVEQLLAK) adopt a coiled-coil conformation. Over residues 753–767 (KQEEAEQEIDHKKEI) the composition is skewed to basic and acidic residues. Acidic residues predominate over residues 805–831 (LDSDDDSTAVDSTEESEDAATEDEEDL). At Thr838 the chain carries Phosphothreonine. The Helicase ATP-binding domain maps to 926 to 1091 (VTMNERKLNG…WSLMHFLMPY (166 aa)). 939 to 946 (DEMGLGKT) is an ATP binding site. The disordered stretch occupies residues 1471–1492 (VQKQSIANGKTEPEEETEAEDP). The 151-residue stretch at 1662 to 1812 (TMDRLLRQLK…DMAIEGGNFT (151 aa)) folds into the Helicase C-terminal domain. The tract at residues 1828 to 1856 (EQSEQDESSQEKSENKDRIVATTTLSDTP) is disordered. The segment covering 1836-1846 (SQEKSENKDRI) has biased composition (basic and acidic residues). The stretch at 1951–1996 (AAWTAEQLRAAEAELEAQKREWEANRLAAMHKEEELLKQETEAEEM) forms a coiled coil. Residues 2061–2100 (KEHKRSRTDAGYDGSRRPNKMRREDNYVPPRSLFDRPTPQ) form a disordered region. The span at 2067–2086 (RTDAGYDGSRRPNKMRREDN) shows a compositional bias: basic and acidic residues. A Myb-like domain is found at 2136–2205 (TEPEAMAEWC…QCRWRYETHI (70 aa)). Residues 2318–2362 (IREKQRGQQMSQPPVGVGVVQQMQQQSQQQQQPAPPPLPQQQQPQ) form a disordered region. A compositionally biased stretch (low complexity) spans 2325-2349 (QQMSQPPVGVGVVQQMQQQSQQQQQ).

This sequence belongs to the SNF2/RAD54 helicase family. SWR1 subfamily. In terms of assembly, component of the Tip60 chromatin-remodeling complex which contains Domino, Tip60, Tra1, Brd8, E(Pc), DMAP1, Pontin, Reptin, Ing3, Act87E, BAP55, Mrg15, MrgBP, Gas41 and YL-1. In terms of tissue distribution, isoform B is present at high levels in ovary, in follicle cells, nurse cells and oocyte. Isoform B is also present in germline and somatic stem cells from the germarium. Isoform A is undetectable in adult ovary (at protein level).

The protein resides in the nucleus. Functionally, mediates the ATP-dependent exchange of unmodified histone H2AV for its phosphorylated and acetylated form H2AVK5acS138ph, leading to transcriptional regulation of selected genes by chromatin remodeling. Involved in Notch signaling. Represses E2F target genes. Required for somatic stem cell self-renewal but not for germline stem cell self-renewal. Involved in oogenesis. The polypeptide is Helicase domino (dom) (Drosophila melanogaster (Fruit fly)).